A 218-amino-acid polypeptide reads, in one-letter code: Small ribosomal subunit protein uS3c (218 aa).

One can recognise a KH type-2 domain in the interval 47 to 118 (IQKTIKISSG…KLNIAITRIA (72 aa)).

The protein belongs to the universal ribosomal protein uS3 family. In terms of assembly, part of the 30S ribosomal subunit.

Its subcellular location is the plastid. It is found in the chloroplast. The sequence is that of Small ribosomal subunit protein uS3c (rps3) from Lotus japonicus (Lotus corniculatus var. japonicus).